A 183-amino-acid chain; its full sequence is Small ribosomal subunit protein bS16 (183 aa).

Over residues 149 to 161 the composition is skewed to basic and acidic residues; it reads EKKAAEAAAKAEA. The segment at 149–183 is disordered; sequence EKKAAEAAAKAEAEAANAPAEEAPAAEATEAPAEA. Positions 162-183 are enriched in low complexity; it reads EAANAPAEEAPAAEATEAPAEA.

It belongs to the bacterial ribosomal protein bS16 family.

The chain is Small ribosomal subunit protein bS16 from Phocaeicola vulgatus (strain ATCC 8482 / DSM 1447 / JCM 5826 / CCUG 4940 / NBRC 14291 / NCTC 11154) (Bacteroides vulgatus).